We begin with the raw amino-acid sequence, 444 residues long: 23S rRNA (uracil(1939)-C(5))-methyltransferase RlmD (444 aa).

In terms of domain architecture, TRAM spans 5–64 (KPKLNLTSQTARIVNLSHDGRGIARVNGKATFIQGALPGEVVEFQYTRIKKDFDEGKLLS). [4Fe-4S] cluster-binding residues include cysteine 77, cysteine 83, cysteine 86, and cysteine 166. Residues glutamine 276, phenylalanine 305, asparagine 310, glutamate 326, asparagine 353, and aspartate 374 each coordinate S-adenosyl-L-methionine. The active-site Nucleophile is cysteine 400.

The protein belongs to the class I-like SAM-binding methyltransferase superfamily. RNA M5U methyltransferase family. RlmD subfamily.

It catalyses the reaction uridine(1939) in 23S rRNA + S-adenosyl-L-methionine = 5-methyluridine(1939) in 23S rRNA + S-adenosyl-L-homocysteine + H(+). Its function is as follows. Catalyzes the formation of 5-methyl-uridine at position 1939 (m5U1939) in 23S rRNA. This is 23S rRNA (uracil(1939)-C(5))-methyltransferase RlmD from Legionella pneumophila (strain Corby).